The chain runs to 245 residues: 2,3,4,5-tetrahydropyridine-2,6-dicarboxylate N-acetyltransferase (245 aa).

This sequence belongs to the transferase hexapeptide repeat family. DapH subfamily.

It catalyses the reaction (S)-2,3,4,5-tetrahydrodipicolinate + acetyl-CoA + H2O = L-2-acetamido-6-oxoheptanedioate + CoA. The protein operates within amino-acid biosynthesis; L-lysine biosynthesis via DAP pathway; LL-2,6-diaminopimelate from (S)-tetrahydrodipicolinate (acetylase route): step 1/3. In terms of biological role, catalyzes the transfer of an acetyl group from acetyl-CoA to tetrahydrodipicolinate. The sequence is that of 2,3,4,5-tetrahydropyridine-2,6-dicarboxylate N-acetyltransferase from Methanopyrus kandleri (strain AV19 / DSM 6324 / JCM 9639 / NBRC 100938).